Here is a 124-residue protein sequence, read N- to C-terminus: Large ribosomal subunit protein uL22 (124 aa).

It belongs to the universal ribosomal protein uL22 family. In terms of assembly, part of the 50S ribosomal subunit.

This protein binds specifically to 23S rRNA; its binding is stimulated by other ribosomal proteins, e.g. L4, L17, and L20. It is important during the early stages of 50S assembly. It makes multiple contacts with different domains of the 23S rRNA in the assembled 50S subunit and ribosome. In terms of biological role, the globular domain of the protein is located near the polypeptide exit tunnel on the outside of the subunit, while an extended beta-hairpin is found that lines the wall of the exit tunnel in the center of the 70S ribosome. The chain is Large ribosomal subunit protein uL22 from Macrococcus caseolyticus (strain JCSC5402) (Macrococcoides caseolyticum).